Consider the following 40-residue polypeptide: Meleagrin (40 aa).

Position 1 is a pyrrolidone carboxylic acid (Gln-1). Disulfide bonds link Cys-6-Cys-33, Cys-12-Cys-28, and Cys-16-Cys-32.

The protein belongs to the transferrin family.

In Meleagris gallopavo (Wild turkey), this protein is Meleagrin.